Reading from the N-terminus, the 339-residue chain is DNA-directed RNA polymerase subunit alpha (339 aa).

An alpha N-terminal domain (alpha-NTD) region spans residues 1–233 (MVREEVAGST…DLFLPFLHAE (233 aa)). Residues 264–339 (KKGIPLNCIF…IDLLKNKLSF (76 aa)) are alpha C-terminal domain (alpha-CTD).

It belongs to the RNA polymerase alpha chain family. In plastids the minimal PEP RNA polymerase catalytic core is composed of four subunits: alpha, beta, beta', and beta''. When a (nuclear-encoded) sigma factor is associated with the core the holoenzyme is formed, which can initiate transcription.

It localises to the plastid. The protein localises to the chloroplast. The catalysed reaction is RNA(n) + a ribonucleoside 5'-triphosphate = RNA(n+1) + diphosphate. Its function is as follows. DNA-dependent RNA polymerase catalyzes the transcription of DNA into RNA using the four ribonucleoside triphosphates as substrates. The sequence is that of DNA-directed RNA polymerase subunit alpha from Aegilops uniaristata (Goatgrass).